The sequence spans 447 residues: MQVTETVNESLKREYKIVIPAADIAERSARRLEELKGQMRLPGFRPGKVPMSMLRQRFGKSVLGEVLEKAVQESIREVMTSHELKPATQPDIDLISEVEEGKDVEFTLALEVLPEIGETDFSALALEREVAEVAAEKIEEALETLRQQSKTHEPVTDGRAAAGGDLVVIDFIGKLDGEAFEGGSAEAYDLELGSNSFIPGFEDQLIGATAGEARTVTVSFPEDYPAAHLAGKETVFDVTVKEVKQAVVPELDDDLAKAFGKESAEALREAVKADLQGELDEVSKTKLKRKLLDALADGHDFPVPQTLVDAEFEGIWAQIEKAKTDGQLDEEDAAKSDEDLRADYRKIAERRVRLGLLLADVGQRAQVTVAQEDLNKALMRELRRFPGQEAAVINYYRNNQQAMDNLRAPVFEDKVCAHILALATVTDKPVSVEDLMKDPDEDATPTA.

Residues 164-249 enclose the PPIase FKBP-type domain; sequence GDLVVIDFIG…VKEVKQAVVP (86 aa).

This sequence belongs to the FKBP-type PPIase family. Tig subfamily.

Its subcellular location is the cytoplasm. The catalysed reaction is [protein]-peptidylproline (omega=180) = [protein]-peptidylproline (omega=0). In terms of biological role, involved in protein export. Acts as a chaperone by maintaining the newly synthesized protein in an open conformation. Functions as a peptidyl-prolyl cis-trans isomerase. This is Trigger factor from Rhodospirillum rubrum (strain ATCC 11170 / ATH 1.1.1 / DSM 467 / LMG 4362 / NCIMB 8255 / S1).